Consider the following 447-residue polypeptide: Tubulin beta chain (447 aa).

Residues Gln11, Glu69, Ser138, Gly142, Thr143, Gly144, Asn204, and Asn226 each coordinate GTP. A Mg(2+)-binding site is contributed by Glu69. Residues 424–447 (QYQEASVSEGEEEYDEEAPLEGEE) form a disordered region. Acidic residues predominate over residues 432 to 447 (EGEEEYDEEAPLEGEE).

The protein belongs to the tubulin family. Dimer of alpha and beta chains. A typical microtubule is a hollow water-filled tube with an outer diameter of 25 nm and an inner diameter of 15 nM. Alpha-beta heterodimers associate head-to-tail to form protofilaments running lengthwise along the microtubule wall with the beta-tubulin subunit facing the microtubule plus end conferring a structural polarity. Microtubules usually have 13 protofilaments but different protofilament numbers can be found in some organisms and specialized cells. The cofactor is Mg(2+).

The protein resides in the cytoplasm. It is found in the cytoskeleton. Functionally, tubulin is the major constituent of microtubules, a cylinder consisting of laterally associated linear protofilaments composed of alpha- and beta-tubulin heterodimers. Microtubules grow by the addition of GTP-tubulin dimers to the microtubule end, where a stabilizing cap forms. Below the cap, tubulin dimers are in GDP-bound state, owing to GTPase activity of alpha-tubulin. The sequence is that of Tubulin beta chain (TUB1) from Cercospora beticola (Sugarbeet leaf spot fungus).